The sequence spans 449 residues: Heterogeneous nuclear ribonucleoprotein H (449 aa).

Met-1 is modified (N-acetylmethionine). An N-acetylmethionine; in Heterogeneous nuclear ribonucleoprotein H, N-terminally processed modification is found at Met-2. The region spanning Phe-11–Asn-90 is the RRM 1 domain. Ser-23 bears the Phosphoserine mark. A Glycyl lysine isopeptide (Lys-Gly) (interchain with G-Cter in SUMO2) cross-link involves residue Lys-35. 2 positions are modified to phosphoserine: Ser-54 and Ser-63. Glycyl lysine isopeptide (Lys-Gly) (interchain with G-Cter in SUMO2) cross-links involve residues Lys-87 and Lys-98. The region spanning Gly-111–Arg-188 is the RRM 2 domain. The residue at position 233 (Arg-233) is a Dimethylated arginine; alternate. Arg-233 is subject to Omega-N-methylarginine; alternate. One copy of the 1-1 repeat lies at Gly-234–Tyr-249. The interval Gly-234–Tyr-433 is 2 X 16 AA Gly-rich approximate repeats. Tyr-246 is modified (phosphotyrosine). Residues His-289–Thr-364 enclose the RRM 3 domain. The residue at position 310 (Ser-310) is a Phosphoserine. A run of 3 repeats spans residues His-354 to Tyr-372, His-374 to Tyr-392, and Gly-418 to Tyr-433. The 2 X 19 AA perfect repeats stretch occupies residues His-354–Tyr-392.

In terms of assembly, part of a ternary complex containing FUBP2, PTBP1, PTBP2 and HNRNPH1. Identified in the spliceosome C complex. Interacts with IGF2BP1. Interacts with CUGBP1; the interaction is RNA-dependent. Interacts with MBNL1; the interaction in RNA-independent.

The protein localises to the nucleus. It is found in the nucleoplasm. In terms of biological role, this protein is a component of the heterogeneous nuclear ribonucleoprotein (hnRNP) complexes which provide the substrate for the processing events that pre-mRNAs undergo before becoming functional, translatable mRNAs in the cytoplasm. Mediates pre-mRNA alternative splicing regulation. Inhibits, together with CUGBP1, insulin receptor (IR) pre-mRNA exon 11 inclusion in myoblast. Binds to the IR RNA. Binds poly(RG). The protein is Heterogeneous nuclear ribonucleoprotein H (Hnrnph1) of Rattus norvegicus (Rat).